Consider the following 250-residue polypeptide: Cellulose biosynthesis protein BcsQ (250 aa).

An ATP-binding site is contributed by 9-16 (VRGGVGTT).

Belongs to the BcsQ family.

The protein resides in the cytoplasm. In terms of biological role, essential for cellulose biosynthesis, shown for strain 1094, a commensal, natural cellulose producer. Also shown in strain W3110 which has a restored reading frame (TAG stop codon to TTG for amino acid 6, called strain AR3110), this protein. May play a role in subcellular localization of an active cellulose biosynthesis apparatus at the bacterial cell pole. The combination of cellulose and the curli fiber network confer cohesion, elasticity and tissue-like properties to colonies. This is Cellulose biosynthesis protein BcsQ from Escherichia coli (strain K12).